Consider the following 90-residue polypeptide: DNA-binding protein HTa (90 aa).

Belongs to the bacterial histone-like protein family. Homotetramer.

Histone-like DNA-binding protein which is capable of wrapping DNA to stabilize it, and thus to prevent its denaturation under extreme environmental conditions. The chain is DNA-binding protein HTa from Thermoplasma acidophilum (strain ATCC 25905 / DSM 1728 / JCM 9062 / NBRC 15155 / AMRC-C165).